The following is a 469-amino-acid chain: UDP-N-acetylmuramate--L-alanine ligase (469 aa).

Residue 114-120 (GTHGKTT) participates in ATP binding.

Belongs to the MurCDEF family.

Its subcellular location is the cytoplasm. It carries out the reaction UDP-N-acetyl-alpha-D-muramate + L-alanine + ATP = UDP-N-acetyl-alpha-D-muramoyl-L-alanine + ADP + phosphate + H(+). It functions in the pathway cell wall biogenesis; peptidoglycan biosynthesis. Cell wall formation. This chain is UDP-N-acetylmuramate--L-alanine ligase, found in Chlorobium phaeovibrioides (strain DSM 265 / 1930) (Prosthecochloris vibrioformis (strain DSM 265)).